A 286-amino-acid chain; its full sequence is Perivitellin-2 31 kDa subunit (286 aa).

Positions 1–30 (MVKKIHFVMERHASIVAFLLAVLALTESQA) are cleaved as a signal peptide. An N-linked (GlcNAc...) asparagine glycan is attached at asparagine 101.

Belongs to the tectonin family. Perivitellin-2 is a dimer of heterodimers held together head-to-tail by non-covalent forces. The heterodimer is composed of the tachylectin subunit (31 kDa) and the MACPF subunit (67 kDa) that are disulfide-linked. PV2 is a very high density lipoprotein (VHDL). It contains 3.75% of lipids. The major lipid classes are free sterols and phospholipids and also have significant quantities of energy-providing triacylglycerides and free fatty acids. Produced by albumen secretory cells. Found in developing eggs.

It localises to the secreted. The protein resides in the target cell membrane. In terms of biological role, the egg defensive protein perivitellin-2 is a pore-forming two-subunit glycoprotein that affects both the nervous and digestive systems of mammals. In addition, it is a source of both structural and energetic molecules during embryonic development. The tachylectin subunit (31 kDa) binds target membranes while the MACPF subunit (67 kDa) disrupts lipid bilayers forming large pores (inner diameter of about 5.6 nm) altering the plasma membrance conductance. Both in vivo and in vitro, the protein shows wide pH range stability and is resistant to enzymatic proteolysis from gastrointestinal environments. It is cytotoxic to both epithelial and immune cells from the digestive system of mammals. It induces enterocyte death by a lytic mechanism and disrupts enterocyte monolayers in a dose-dependent manner. After oral administration to mice, it binds enterocytes and induces large dose-dependent morphological changes on their small intestine mucosa, reducing the absorptive surface. Additionally, it is detected in the Peyer's patches where it activates lymphoid follicles and triggers apoptosis. The toxin can also traverse the intestinal barrier and induce oral adaptive immunity with evidence of circulating antibody response. The toxin also shows hemagglutination properties thanks to the tachylectin subunit, but has no hemolytic activity. In addition to enterotoxin activity, the toxin also acts as a neurotoxin, since an intraperitoneal injection can induce paralysis of the mice rear limbs, followed by death. The sequence is that of Perivitellin-2 31 kDa subunit from Pomacea maculata (Giant applesnail).